The primary structure comprises 139 residues: Ribonuclease P protein component (139 aa).

Positions 116–139 (FSKNKSTIGGEYSPKNEQCESELP) are disordered.

The protein belongs to the RnpA family. In terms of assembly, consists of a catalytic RNA component (M1 or rnpB) and a protein subunit.

The catalysed reaction is Endonucleolytic cleavage of RNA, removing 5'-extranucleotides from tRNA precursor.. Functionally, RNaseP catalyzes the removal of the 5'-leader sequence from pre-tRNA to produce the mature 5'-terminus. It can also cleave other RNA substrates such as 4.5S RNA. The protein component plays an auxiliary but essential role in vivo by binding to the 5'-leader sequence and broadening the substrate specificity of the ribozyme. This is Ribonuclease P protein component from Chlamydia abortus (strain DSM 27085 / S26/3) (Chlamydophila abortus).